The following is a 269-amino-acid chain: 4-hydroxy-tetrahydrodipicolinate reductase (269 aa).

NAD(+) is bound by residues 10-15, Glu36, 99-101, and 123-126; these read GANGRM, GTT, and AANF. His156 acts as the Proton donor/acceptor in catalysis. His157 lines the (S)-2,3,4,5-tetrahydrodipicolinate pocket. Lys160 acts as the Proton donor in catalysis. 166-167 provides a ligand contact to (S)-2,3,4,5-tetrahydrodipicolinate; sequence GT.

Belongs to the DapB family.

It is found in the cytoplasm. It carries out the reaction (S)-2,3,4,5-tetrahydrodipicolinate + NAD(+) + H2O = (2S,4S)-4-hydroxy-2,3,4,5-tetrahydrodipicolinate + NADH + H(+). The enzyme catalyses (S)-2,3,4,5-tetrahydrodipicolinate + NADP(+) + H2O = (2S,4S)-4-hydroxy-2,3,4,5-tetrahydrodipicolinate + NADPH + H(+). The protein operates within amino-acid biosynthesis; L-lysine biosynthesis via DAP pathway; (S)-tetrahydrodipicolinate from L-aspartate: step 4/4. Its function is as follows. Catalyzes the conversion of 4-hydroxy-tetrahydrodipicolinate (HTPA) to tetrahydrodipicolinate. In Neisseria meningitidis serogroup B (strain ATCC BAA-335 / MC58), this protein is 4-hydroxy-tetrahydrodipicolinate reductase.